The following is a 722-amino-acid chain: Glycine--tRNA ligase beta subunit (722 aa).

Belongs to the class-II aminoacyl-tRNA synthetase family. As to quaternary structure, tetramer of two alpha and two beta subunits.

The protein resides in the cytoplasm. The catalysed reaction is tRNA(Gly) + glycine + ATP = glycyl-tRNA(Gly) + AMP + diphosphate. The chain is Glycine--tRNA ligase beta subunit from Xylella fastidiosa (strain M12).